The chain runs to 150 residues: Plasmin C (150 aa).

The N-terminal stretch at M1–C14 is a signal peptide.

In Physarum polycephalum (Slime mold), this protein is Plasmin C (PLSC).